Here is a 1925-residue protein sequence, read N- to C-terminus: Cilia- and flagella-associated protein 65 (1925 aa).

Residues 188–208 (FFTVIPQPIFLSPGITLTLPI) form a helical membrane-spanning segment. An MSP domain is found at 877-986 (QLKLDTHKSL…THYMLRLVGV (110 aa)). Residues 1525 to 1550 (SQQLMRQYHKELQEWKDEKVRQEVEF) are a coiled coil. Disordered regions lie at residues 1645-1667 (KRKAPREESETSEEKSPNKWGPV) and 1736-1823 (SSWE…PESQ). 2 stretches are compositionally biased toward basic and acidic residues: residues 1649 to 1661 (PREESETSEEKSP) and 1739 to 1762 (EDGKGKQPKEDRPEHYPGLGKKEE). Over residues 1763-1804 (GEEEKGEEEEEELEEEEEEEEETEEEELGKEEIEEKEEERDE) the composition is skewed to acidic residues.

This sequence belongs to the CFAP65 family. In terms of assembly, interacts with CFAP47.

Its subcellular location is the cell projection. It is found in the cilium. It localises to the flagellum membrane. The protein localises to the cytoplasmic vesicle. The protein resides in the secretory vesicle. Its subcellular location is the acrosome membrane. It is found in the cytoplasm. Its function is as follows. Plays a role in flagellar formation and sperm motility. The polypeptide is Cilia- and flagella-associated protein 65 (Homo sapiens (Human)).